We begin with the raw amino-acid sequence, 244 residues long: NAD reductase coq12 (244 aa).

A disordered region spans residues 131–158 (NPLMNSEKNSTSVEDLPGSNRTQQTSSH). Positions 132–158 (PLMNSEKNSTSVEDLPGSNRTQQTSSH) are enriched in polar residues.

The protein localises to the mitochondrion. The catalysed reaction is a reduced flavin + NAD(+) = an oxidized flavin + NADH + 2 H(+). In terms of biological role, NADH-dependent flavin reductase that acts in the coenzyme Q biosynthetic pathway. Required for synthesis of the p-hydroxybenzoic acid (PHB) precursor to form a quinone backbone. This chain is NAD reductase coq12, found in Schizosaccharomyces pombe (strain 972 / ATCC 24843) (Fission yeast).